Here is a 276-residue protein sequence, read N- to C-terminus: Shikimate dehydrogenase (NADP(+)) (276 aa).

Residues 15-17 and Thr62 each bind shikimate; that span reads SLS. Lys66 (proton acceptor) is an active-site residue. Glu78 provides a ligand contact to NADP(+). 2 residues coordinate shikimate: Asn87 and Asp102. Residues 151–156 and Ile218 contribute to the NADP(+) site; that span reads NRTVEK. Tyr220 serves as a coordination point for shikimate. An NADP(+)-binding site is contributed by Gly241.

It belongs to the shikimate dehydrogenase family. In terms of assembly, homodimer.

It catalyses the reaction shikimate + NADP(+) = 3-dehydroshikimate + NADPH + H(+). The protein operates within metabolic intermediate biosynthesis; chorismate biosynthesis; chorismate from D-erythrose 4-phosphate and phosphoenolpyruvate: step 4/7. Functionally, involved in the biosynthesis of the chorismate, which leads to the biosynthesis of aromatic amino acids. Catalyzes the reversible NADPH linked reduction of 3-dehydroshikimate (DHSA) to yield shikimate (SA). In Geobacillus kaustophilus (strain HTA426), this protein is Shikimate dehydrogenase (NADP(+)).